The sequence spans 638 residues: Threonine--tRNA ligase (638 aa).

Positions 1 to 61 (MPNIKLPDGS…ERDSELAILT (61 aa)) constitute a TGS domain. The catalytic stretch occupies residues 242-533 (DHRKLGRQLD…LIEHYAGAMP (292 aa)). Cys-333, His-384, and His-510 together coordinate Zn(2+).

This sequence belongs to the class-II aminoacyl-tRNA synthetase family. Homodimer. The cofactor is Zn(2+).

The protein localises to the cytoplasm. The enzyme catalyses tRNA(Thr) + L-threonine + ATP = L-threonyl-tRNA(Thr) + AMP + diphosphate + H(+). Its function is as follows. Catalyzes the attachment of threonine to tRNA(Thr) in a two-step reaction: L-threonine is first activated by ATP to form Thr-AMP and then transferred to the acceptor end of tRNA(Thr). Also edits incorrectly charged L-seryl-tRNA(Thr). This chain is Threonine--tRNA ligase, found in Azoarcus sp. (strain BH72).